The following is a 98-amino-acid chain: Dehydrogenase acuH (98 aa).

The protein operates within secondary metabolite biosynthesis. Its function is as follows. Dehydrogenase; part of the gene cluster that mediates the biosynthesis of aculins. The pathway begins with the synthesis of 6-methylsalicylic acid by the polyketide synthase (PKS) acuA via condensation of acetate and malonate units. The 6-methylsalicylic acid decarboxylase acuB then catalyzes the decarboxylation of 6-methylsalicylic acid to yield m-cresol (also known as 3-methylphenol). These first reactions occur in the cytosol. The intermediate m-cresol is then transported into the endoplasmic reticulum where the cytochrome P450 monooxygenase acuC converts it to m-hydroxybenzyl alcohol, which is further converted to gentisyl alcohol by the cytochrome P450 monooxygenase acuD. Gentisyl alcohol is further oxidized by the oxidoreductase acuE that probably catalyzes hydroxylation of the aromatic ring. The aromatic system might then be opened by oxidation through a Baeyer-Villiger type of oxidation, which could be catalyzed by acuF, with the carboxylic acid at C-1 subsequently reduced to an aldehyde by acuG. Subsequently, a hemiacetal is formed, before the dehydrogenase acuH would reduce the double bond between C-4 and C-6. Finally, keto-enol tautomerism results in formation of aculinic acid, which exists as two diastereomers (both R/S configurations at C-1) by non-enzymatic hemiacetal formation. The carboxypeptidase acuI could be involved in the linking of aculinic acid to an aculene A moiety produced by the aculene biosynthesis cluster and which leads to the production of aculin A. AcuI may also be involved in the attachment of proline to aculinic acid to form epi-aculins A and B. In Aspergillus aculeatus (strain ATCC 16872 / CBS 172.66 / WB 5094), this protein is Dehydrogenase acuH.